We begin with the raw amino-acid sequence, 316 residues long: Aspartate carbamoyltransferase catalytic subunit (316 aa).

Carbamoyl phosphate contacts are provided by R56 and T57. K84 is a binding site for L-aspartate. R106, H139, and Q142 together coordinate carbamoyl phosphate. 2 residues coordinate L-aspartate: R172 and R224. Residues G268 and P269 each contribute to the carbamoyl phosphate site.

This sequence belongs to the aspartate/ornithine carbamoyltransferase superfamily. ATCase family. In terms of assembly, heterododecamer (2C3:3R2) of six catalytic PyrB chains organized as two trimers (C3), and six regulatory PyrI chains organized as three dimers (R2).

The catalysed reaction is carbamoyl phosphate + L-aspartate = N-carbamoyl-L-aspartate + phosphate + H(+). It participates in pyrimidine metabolism; UMP biosynthesis via de novo pathway; (S)-dihydroorotate from bicarbonate: step 2/3. Functionally, catalyzes the condensation of carbamoyl phosphate and aspartate to form carbamoyl aspartate and inorganic phosphate, the committed step in the de novo pyrimidine nucleotide biosynthesis pathway. The chain is Aspartate carbamoyltransferase catalytic subunit from Ligilactobacillus salivarius (strain UCC118) (Lactobacillus salivarius).